Consider the following 134-residue polypeptide: MTNLRKTHPLMKIINSSFIDLPAPSNISSWWNFGSLLGVCLIIQILTGLFLAMHYTSDTMTAFSSVTHICRDVNYGWLIRYLHANGASMFFICLFLHVGRGLYYGSYMYLETWNIGVLLLFAVMATAFMGYVLP.

3 helical membrane passes run 33 to 53 (FGSL…FLAM), 77 to 98 (WLIR…FLHV), and 113 to 133 (WNIG…GYVL). Residues His-83 and His-97 each coordinate heme b.

The protein belongs to the cytochrome b family. In terms of assembly, the cytochrome bc1 complex contains 11 subunits: 3 respiratory subunits (MT-CYB, CYC1 and UQCRFS1), 2 core proteins (UQCRC1 and UQCRC2) and 6 low-molecular weight proteins (UQCRH/QCR6, UQCRB/QCR7, UQCRQ/QCR8, UQCR10/QCR9, UQCR11/QCR10 and a cleavage product of UQCRFS1). This cytochrome bc1 complex then forms a dimer. Heme b serves as cofactor.

It localises to the mitochondrion inner membrane. Functionally, component of the ubiquinol-cytochrome c reductase complex (complex III or cytochrome b-c1 complex) that is part of the mitochondrial respiratory chain. The b-c1 complex mediates electron transfer from ubiquinol to cytochrome c. Contributes to the generation of a proton gradient across the mitochondrial membrane that is then used for ATP synthesis. This is Cytochrome b (MT-CYB) from Sorex shinto sadonis (Sado shrew).